We begin with the raw amino-acid sequence, 494 residues long: Probable malate:quinone oxidoreductase (494 aa).

The protein belongs to the MQO family. FAD is required as a cofactor.

It catalyses the reaction (S)-malate + a quinone = a quinol + oxaloacetate. It participates in carbohydrate metabolism; tricarboxylic acid cycle; oxaloacetate from (S)-malate (quinone route): step 1/1. This is Probable malate:quinone oxidoreductase from Helicobacter hepaticus (strain ATCC 51449 / 3B1).